We begin with the raw amino-acid sequence, 103 residues long: Small ribosomal subunit protein uS10 (103 aa).

Belongs to the universal ribosomal protein uS10 family. Part of the 30S ribosomal subunit.

Involved in the binding of tRNA to the ribosomes. The sequence is that of Small ribosomal subunit protein uS10 from Burkholderia mallei (strain NCTC 10247).